Reading from the N-terminus, the 60-residue chain is Antimicrobial peptide Eval151 (60 aa).

Positions Met1–Cys23 are cleaved as a signal peptide. Position 36 is an arginine amide (Arg36). Basic and acidic residues predominate over residues Arg36–His54. Positions Arg36 to Lys60 are disordered. The propeptide occupies Gly37–Lys60.

This sequence belongs to the non-disulfide-bridged peptide (NDBP) superfamily. In terms of tissue distribution, expressed by the venom gland.

The protein localises to the secreted. Functionally, probable antimicrobial peptide. Has no inhibitory activity against herpes simplex virus type 1 (HSV-1). This chain is Antimicrobial peptide Eval151, found in Euscorpiops validus (Scorpion).